A 465-amino-acid chain; its full sequence is Type II restriction enzyme BsuMI component YdjA (465 aa).

BsuMI restriction activity requires YdiR, YdiS and YdjA.

It catalyses the reaction Endonucleolytic cleavage of DNA to give specific double-stranded fragments with terminal 5'-phosphates.. Functionally, a P subtype restriction enzyme that recognizes the double-stranded sequence 5'-CTCGAG-3'; the cleavage site is unknown. This is Type II restriction enzyme BsuMI component YdjA (ydjA) from Bacillus subtilis (strain 168).